The primary structure comprises 182 residues: MKNNSVKIVVATGIGAALFVIIGWLINIPTPIPNTSIQLQYAVLALFSALFGPLAGFLIGFIGHALKDSFLYGAPWWTWVLGSGLIGLFLAFGVKRETLTQGIFGNKEIIRFNIVQFLANVVVWGIIAPIGDVLVYSEPANKVFTQGIVAGLVNALTIAVAGTLLLKLYAATRTKSGSLDKE.

5 helical membrane passes run 8-28 (IVVA…LINI), 42-62 (AVLA…IGFI), 74-94 (APWW…AFGV), 114-134 (IVQF…GDVL), and 146-166 (QGIV…TLLL).

Belongs to the UPF0397 family.

The protein localises to the cell membrane. The sequence is that of UPF0397 protein YdcD (ydcD) from Lactococcus lactis subsp. lactis (strain IL1403) (Streptococcus lactis).